A 510-amino-acid chain; its full sequence is MRALLSVSDKEGIVEFAKGLEELDWQILSTGGTYKLLKAEGVKATEVSEFTASPEMFEGRVKTLHPKVHGGILHKRDDATHVAQAKEHGIEGIDLVCVNLYPFKETTIRTDDFAEIIENIDIGGPAMVRSAAKNFKDVLIVTSVLDYDEILKRLKEKSDDYEFRRSLMIKAFEHTAAYDSMIANYMNDRFNGGFGDARFIVGSKVFDTRYGENPHQKGALYEFDYFFTNNFRALKGEASFNNMTDINGALMLATSFDDAPAVAIIKHANPCGFAVKDTLLESYVAALKCDPISAYGGVVAINGTLDEELAKKINEIYVEVIIAANVDDAALKVFESKKRIKIFTQDNKFLVRANDKFDFKHIDGGFVFQERDFVKDEELENMKQMSKKFATGSELKDAQIAWKVAALTKSNCVVYVKDGAMVAIGMGMTSRVDAARAAVAKAKELKIDLSGCVLASEAFFPFRDSIDIASKVGVKCVIEPGGSIRDDEVIEAADEHGMSLYFTGVRHFLH.

The MGS-like domain maps to 1–142; sequence MRALLSVSDK…KNFKDVLIVT (142 aa).

It belongs to the PurH family.

It catalyses the reaction (6R)-10-formyltetrahydrofolate + 5-amino-1-(5-phospho-beta-D-ribosyl)imidazole-4-carboxamide = 5-formamido-1-(5-phospho-D-ribosyl)imidazole-4-carboxamide + (6S)-5,6,7,8-tetrahydrofolate. The catalysed reaction is IMP + H2O = 5-formamido-1-(5-phospho-D-ribosyl)imidazole-4-carboxamide. It participates in purine metabolism; IMP biosynthesis via de novo pathway; 5-formamido-1-(5-phospho-D-ribosyl)imidazole-4-carboxamide from 5-amino-1-(5-phospho-D-ribosyl)imidazole-4-carboxamide (10-formyl THF route): step 1/1. Its pathway is purine metabolism; IMP biosynthesis via de novo pathway; IMP from 5-formamido-1-(5-phospho-D-ribosyl)imidazole-4-carboxamide: step 1/1. The sequence is that of Bifunctional purine biosynthesis protein PurH from Campylobacter concisus (strain 13826).